The sequence spans 93 residues: Parbolysin P2 (93 aa).

Intrachain disulfides connect Cys16–Cys37 and Cys22–Cys33.

The protein belongs to the worm cytolysin family. As to expression, localized within the skin and proboscis and are most readily isolated from body mucus secretions.

The protein resides in the secreted. Its function is as follows. Cytolysin that shows hemolytic activity (on bovine erythrocytes, HC(50)=5.75 mg/ml). This hemolytic activity is completely inhibited by small unilamelar vesicles composed of PC/PG, PC/PI and PC/PS in 1:1 molar ratios (with at least 100 mg/ml concentration). This is Parbolysin P2 from Parborlasia corrugatus (Antarctic nemertean worm).